The sequence spans 201 residues: Probable cobalt-precorrin-6B C(15)-methyltransferase (decarboxylating) (201 aa).

S-adenosyl-L-methionine is bound by residues threonine 28, 52-56 (GTGTG), aspartate 76, and alanine 105.

The protein belongs to the methyltransferase superfamily. Archaeal-type CbiT family.

It catalyses the reaction Co-precorrin-6B + S-adenosyl-L-methionine = Co-precorrin-7 + S-adenosyl-L-homocysteine + CO2. The protein operates within cofactor biosynthesis; adenosylcobalamin biosynthesis; cob(II)yrinate a,c-diamide from sirohydrochlorin (anaerobic route): step 8/10. Functionally, catalyzes the methylation of C-15 in cobalt-precorrin-6B followed by the decarboxylation of C-12 to form cobalt-precorrin-7. In Thermoplasma volcanium (strain ATCC 51530 / DSM 4299 / JCM 9571 / NBRC 15438 / GSS1), this protein is Probable cobalt-precorrin-6B C(15)-methyltransferase (decarboxylating).